Here is a 355-residue protein sequence, read N- to C-terminus: MNFKDKNCFPNELIALAKISKNDVLDKFGTDVFKKVVYDVLTGKNVREFTEILTRTRLLESNLSFFDFFVDKMKEGITPKQLYLYAKNALSNKSYVKSNQPVLEWMVMMTNKQTQNVLRDEHGDGFDRLALRTQEEILKIKNGYEDKIGEISIGGQKVSLEDFCYIILSLGSQTLTIRGSEKSLHGKYFEKLILGSLFTIMGFEYKEKIEEGLNAKCFTLSTRADDRESDATLVFNGKAIRVDIGFIGRGNTEISLDKVSRFRRMDDIGGVMHNISTMVIVDVIGDRSRIVNMAEEIDGKVVAMSDPYWVAKVSSYISSKLNVDDLLEDKPQLKDIQSFISDALENVDLEKYIKL.

It catalyses the reaction Endonucleolytic cleavage of DNA to give specific double-stranded fragments with terminal 5'-phosphates.. Its function is as follows. A P subtype restriction enzyme that recognizes the double-stranded sequence 5'-CCWWGG-3' and cleaves after C-1. This is Type II restriction enzyme CfrBI from Citrobacter freundii.